We begin with the raw amino-acid sequence, 377 residues long: Peptide chain release factor 2 (377 aa).

Residue Gln257 is modified to N5-methylglutamine.

The protein belongs to the prokaryotic/mitochondrial release factor family. Methylated by PrmC. Methylation increases the termination efficiency of RF2.

It is found in the cytoplasm. Functionally, peptide chain release factor 2 directs the termination of translation in response to the peptide chain termination codons UGA and UAA. The protein is Peptide chain release factor 2 of Lactiplantibacillus plantarum (strain ATCC BAA-793 / NCIMB 8826 / WCFS1) (Lactobacillus plantarum).